The following is a 135-amino-acid chain: Large ribosomal subunit protein mL54 (135 aa).

This sequence belongs to the mitochondrion-specific ribosomal protein mL54 family. As to quaternary structure, component of the mitochondrial ribosome large subunit (39S) which comprises a 16S rRNA and about 50 distinct proteins.

The protein resides in the mitochondrion. The sequence is that of Large ribosomal subunit protein mL54 (mrpl54) from Danio rerio (Zebrafish).